The chain runs to 154 residues: 3-hydroxyacyl-[acyl-carrier-protein] dehydratase FabZ (154 aa).

The active site involves His-57.

The protein belongs to the thioester dehydratase family. FabZ subfamily.

It is found in the cytoplasm. It carries out the reaction a (3R)-hydroxyacyl-[ACP] = a (2E)-enoyl-[ACP] + H2O. In terms of biological role, involved in unsaturated fatty acids biosynthesis. Catalyzes the dehydration of short chain beta-hydroxyacyl-ACPs and long chain saturated and unsaturated beta-hydroxyacyl-ACPs. The protein is 3-hydroxyacyl-[acyl-carrier-protein] dehydratase FabZ of Sinorhizobium medicae (strain WSM419) (Ensifer medicae).